The chain runs to 419 residues: Serine--tRNA ligase (419 aa).

226 to 228 (TSE) contributes to the L-serine binding site. ATP contacts are provided by residues 257–259 (RRE) and Val-273. Glu-280 contributes to the L-serine binding site. 344 to 347 (ELTS) provides a ligand contact to ATP. Thr-379 contributes to the L-serine binding site.

Belongs to the class-II aminoacyl-tRNA synthetase family. Type-1 seryl-tRNA synthetase subfamily. As to quaternary structure, homodimer. The tRNA molecule binds across the dimer.

It is found in the cytoplasm. It carries out the reaction tRNA(Ser) + L-serine + ATP = L-seryl-tRNA(Ser) + AMP + diphosphate + H(+). It catalyses the reaction tRNA(Sec) + L-serine + ATP = L-seryl-tRNA(Sec) + AMP + diphosphate + H(+). Its pathway is aminoacyl-tRNA biosynthesis; selenocysteinyl-tRNA(Sec) biosynthesis; L-seryl-tRNA(Sec) from L-serine and tRNA(Sec): step 1/1. In terms of biological role, catalyzes the attachment of serine to tRNA(Ser). Is also able to aminoacylate tRNA(Sec) with serine, to form the misacylated tRNA L-seryl-tRNA(Sec), which will be further converted into selenocysteinyl-tRNA(Sec). The protein is Serine--tRNA ligase of Corynebacterium diphtheriae (strain ATCC 700971 / NCTC 13129 / Biotype gravis).